A 561-amino-acid polypeptide reads, in one-letter code: Cytochrome P450 monooxygenase iboC (561 aa).

Residues 8–28 (RFYYQLLAAVLIPALFVAWAA) traverse the membrane as a helical segment. Position 484 (Cys-484) interacts with heme.

It belongs to the cytochrome P450 family. The cofactor is heme.

It is found in the membrane. It functions in the pathway secondary metabolite biosynthesis. Its function is as follows. Cytochrome P450 monooxygenase; part of the gene cluster that mediates the biosynthesis of the psychoactive metabolites ibotenic acid and muscimol. The first committed step is glutamate hydroxylation by the 2-oxoglutarate-dependent dioxygenase iboH, and the last step is decarboxylation of ibotenic acid to muscimol by the decarboxylase iboD. The order of the intermediate reactions is somewhat ambiguous. IboA likely activates the carboxylic acid at position 5 to introduce an amide bond, and the flavin monooxygenase iboF generates the N-O bond. There are several options for the latter step. One option is that iboF directly hydroxylates the amide nitrogen formed by iboA to produce a hydroxamic acid species. Another option is that iboF hydroxylates an external N-containing compound, whose resulting N-O bond is subsequently introduced into the hydroxyglutamate scaffold. The paralogous PLP-dependent cystathionine gamma-synthase-like enzymes iboG1 and iboG2 are likely involved in substitution of the OH group at position 3 by the O-N moiety. The first cyclic intermediate is most probably tricholomic acid which is likely desaturated to ibotenic acid by the cytochrome P450 monooxygenase iboC. This Amanita muscaria (strain Koide BX008) protein is Cytochrome P450 monooxygenase iboC.